A 344-amino-acid chain; its full sequence is GTP 3',8-cyclase (344 aa).

Positions 19–245 constitute a Radical SAM core domain; the sequence is PFGRAVTYLR…DIPYRTGGPA (227 aa). A GTP-binding site is contributed by arginine 28. [4Fe-4S] cluster is bound by residues cysteine 35 and cysteine 39. S-adenosyl-L-methionine is bound at residue tyrosine 41. Cysteine 42 lines the [4Fe-4S] cluster pocket. Arginine 77 serves as a coordination point for GTP. Position 81 (glycine 81) interacts with S-adenosyl-L-methionine. Threonine 111 is a GTP binding site. Serine 135 lines the S-adenosyl-L-methionine pocket. Lysine 171 serves as a coordination point for GTP. Methionine 205 contributes to the S-adenosyl-L-methionine binding site. [4Fe-4S] cluster-binding residues include cysteine 268 and cysteine 271. 273 to 275 is a GTP binding site; it reads RVR. Cysteine 285 lines the [4Fe-4S] cluster pocket.

The protein belongs to the radical SAM superfamily. MoaA family. In terms of assembly, monomer and homodimer. [4Fe-4S] cluster is required as a cofactor.

It catalyses the reaction GTP + AH2 + S-adenosyl-L-methionine = (8S)-3',8-cyclo-7,8-dihydroguanosine 5'-triphosphate + 5'-deoxyadenosine + L-methionine + A + H(+). It participates in cofactor biosynthesis; molybdopterin biosynthesis. Catalyzes the cyclization of GTP to (8S)-3',8-cyclo-7,8-dihydroguanosine 5'-triphosphate. The sequence is that of GTP 3',8-cyclase from Brucella ovis (strain ATCC 25840 / 63/290 / NCTC 10512).